The sequence spans 673 residues: L-type lectin-domain containing receptor kinase SIT2 (673 aa).

The signal sequence occupies residues 1-27 (MVLPKPEMPFFVLLLFLGLGCLRPAAA). Residues 28 to 296 (TDERFVFNGF…FPKPRSKTLE (269 aa)) are Extracellular-facing. The legume-lectin like stretch occupies residues 32–270 (FVFNGFTGAN…VLGWSFKMNG (239 aa)). Residues N41, N60, N82, N118, N138, N191, N214, N235, and N276 are each glycosylated (N-linked (GlcNAc...) asparagine). A helical transmembrane segment spans residues 297-317 (IVLPIASAVLVFAVAAAVFVF). Residues 318–673 (MRRRRMFSEL…GTFSDLSGGR (356 aa)) are Cytoplasmic-facing. In terms of domain architecture, Protein kinase spans 352-631 (FSDKRLLGIG…LEGDVPLPEL (280 aa)). ATP contacts are provided by residues 358–366 (LGIGGFGRV) and K381. The active-site Proton acceptor is D477.

This sequence in the C-terminal section; belongs to the protein kinase superfamily. Ser/Thr protein kinase family. It in the N-terminal section; belongs to the leguminous lectin family. As to expression, mainly expressed in root epidermal cells.

The protein resides in the cell membrane. The catalysed reaction is L-seryl-[protein] + ATP = O-phospho-L-seryl-[protein] + ADP + H(+). It catalyses the reaction L-threonyl-[protein] + ATP = O-phospho-L-threonyl-[protein] + ADP + H(+). Functionally, lectin-domain containing receptor kinase involved in salt stress response. Acts as a negative regulator of salt tolerance. In Oryza sativa subsp. japonica (Rice), this protein is L-type lectin-domain containing receptor kinase SIT2.